The primary structure comprises 91 residues: Large ribosomal subunit protein uL23 (91 aa).

It belongs to the universal ribosomal protein uL23 family. As to quaternary structure, part of the 50S ribosomal subunit. Contacts protein L29, and trigger factor when it is bound to the ribosome.

One of the early assembly proteins it binds 23S rRNA. One of the proteins that surrounds the polypeptide exit tunnel on the outside of the ribosome. Forms the main docking site for trigger factor binding to the ribosome. This is Large ribosomal subunit protein uL23 from Staphylococcus saprophyticus subsp. saprophyticus (strain ATCC 15305 / DSM 20229 / NCIMB 8711 / NCTC 7292 / S-41).